We begin with the raw amino-acid sequence, 968 residues long: Isoleucine--tRNA ligase (968 aa).

A 'HIGH' region motif is present at residues 68 to 78 (PYANGALHMGH). Glutamate 584 contributes to the L-isoleucyl-5'-AMP binding site. The short motif at 625–629 (KMSKS) is the 'KMSKS' region element. Lysine 628 is an ATP binding site. Cysteine 938, cysteine 941, cysteine 958, and cysteine 961 together coordinate Zn(2+).

Belongs to the class-I aminoacyl-tRNA synthetase family. IleS type 1 subfamily. As to quaternary structure, monomer. Requires Zn(2+) as cofactor.

Its subcellular location is the cytoplasm. It carries out the reaction tRNA(Ile) + L-isoleucine + ATP = L-isoleucyl-tRNA(Ile) + AMP + diphosphate. In terms of biological role, catalyzes the attachment of isoleucine to tRNA(Ile). As IleRS can inadvertently accommodate and process structurally similar amino acids such as valine, to avoid such errors it has two additional distinct tRNA(Ile)-dependent editing activities. One activity is designated as 'pretransfer' editing and involves the hydrolysis of activated Val-AMP. The other activity is designated 'posttransfer' editing and involves deacylation of mischarged Val-tRNA(Ile). The chain is Isoleucine--tRNA ligase from Prochlorococcus marinus (strain MIT 9313).